The chain runs to 386 residues: Putative 8-amino-7-oxononanoate synthase (386 aa).

Residue Arg-22 coordinates substrate. 109-110 (GY) provides a ligand contact to pyridoxal 5'-phosphate. His-134 lines the substrate pocket. Residues Ser-182, 207 to 210 (DEAH), and 238 to 241 (TLSK) contribute to the pyridoxal 5'-phosphate site. Lys-241 carries the post-translational modification N6-(pyridoxal phosphate)lysine. Thr-356 is a binding site for substrate.

Belongs to the class-II pyridoxal-phosphate-dependent aminotransferase family. BioF subfamily. As to quaternary structure, homodimer. Requires pyridoxal 5'-phosphate as cofactor.

The enzyme catalyses 6-carboxyhexanoyl-[ACP] + L-alanine + H(+) = (8S)-8-amino-7-oxononanoate + holo-[ACP] + CO2. Its pathway is cofactor biosynthesis; biotin biosynthesis. Catalyzes the decarboxylative condensation of pimeloyl-[acyl-carrier protein] and L-alanine to produce 8-amino-7-oxononanoate (AON), [acyl-carrier protein], and carbon dioxide. This chain is Putative 8-amino-7-oxononanoate synthase (bioF), found in Trichormus variabilis (strain ATCC 29413 / PCC 7937) (Anabaena variabilis).